A 297-amino-acid chain; its full sequence is Protease HtpX homolog (297 aa).

Transmembrane regions (helical) follow at residues 14–34 (VILLFAFFVLLVVIGAAAGYL) and 39–59 (YQLGAAFALIIGAIYAFSMIF). His143 provides a ligand contact to Zn(2+). Glu144 is an active-site residue. His147 is a Zn(2+) binding site. The next 2 helical transmembrane spans lie at 158–178 (IAVALASAVTLISSIGGRMMW) and 193–213 (GFGAIMLIFSILSLILAPLAA). Position 225 (Glu225) interacts with Zn(2+).

It belongs to the peptidase M48B family. It depends on Zn(2+) as a cofactor.

It is found in the cell membrane. The protein is Protease HtpX homolog of Streptococcus equi subsp. zooepidemicus (strain MGCS10565).